Reading from the N-terminus, the 738-residue chain is Probable trehalase (738 aa).

The tract at residues M1–T44 is disordered. Substrate contacts are provided by residues R289, W296–D297, N333, R342, R342–Q344, and G463. Residues D465 and E660 each act as proton donor/acceptor in the active site.

This sequence belongs to the glycosyl hydrolase 37 family.

It catalyses the reaction alpha,alpha-trehalose + H2O = alpha-D-glucose + beta-D-glucose. This is Probable trehalase (NTH2) from Eremothecium gossypii (strain ATCC 10895 / CBS 109.51 / FGSC 9923 / NRRL Y-1056) (Yeast).